The primary structure comprises 3164 residues: ORFB polyprotein (3164 aa).

A Peptidase C8 domain is found at 271 to 418; the sequence is MARAIGLSHA…IWNDPNILVG (148 aa). Catalysis depends on for papain-like protease p48 activity residues Cys341 and His388. Transmembrane regions (helical) follow at residues 684–704, 791–811, 823–843, 1166–1186, 1215–1235, and 1356–1376; these read LGFL…LLPF, IMIA…YVPY, YMLL…GYAC, AGLF…AAIM, FPIF…VSAY, and ALGF…LRPP. The segment at 1419–1445 is disordered; the sequence is IEEKPSDAGRSEPIPDNDKQEESDYDQ. Positions 1792–2207 are RNA-directed RNA polymerase; the sequence is FYKSRKALKQ…AEDSADYRTW (416 aa). Transmembrane regions (helical) follow at residues 2494–2514, 2516–2536, and 2589–2609; these read VRIY…MHWV, LFVQ…WSFW, and LGLV…EVLF. The region spanning 2650–2795 is the Helicase ATP-binding domain; it reads ATKAIEHGHV…IPFLEPTLPK (146 aa). ATP is bound at residue 2663 to 2670; sequence AKTASGKS. Residues 2750–2753 carry the DEFH box motif; the sequence is DEFH.

The protein in the C-terminal section; belongs to the DEAD box helicase family. Papain-like protease p48 is autocatalytically processed. The putative RNA-directed RNA polymerase/helicase is probably further processed.

The protein localises to the host membrane. The enzyme catalyses RNA(n) + a ribonucleoside 5'-triphosphate = RNA(n+1) + diphosphate. It catalyses the reaction ATP + H2O = ADP + phosphate + H(+). Papain-like protease p48 is a cysteine protease of the peptidase family C8. This Cryphonectria parasitica (Chestnut blight fungus) protein is ORFB polyprotein.